A 408-amino-acid chain; its full sequence is Argininosuccinate synthase (408 aa).

Residues 10 to 18 and A37 contribute to the ATP site; that span reads AYSGGLDTS. L-citrulline is bound by residues Y90 and S95. G120 provides a ligand contact to ATP. T122, N126, and D127 together coordinate L-aspartate. Residue N126 coordinates L-citrulline. Residues R130, S181, S190, E266, and Y278 each coordinate L-citrulline.

The protein belongs to the argininosuccinate synthase family. Type 1 subfamily. As to quaternary structure, homotetramer.

The protein resides in the cytoplasm. The catalysed reaction is L-citrulline + L-aspartate + ATP = 2-(N(omega)-L-arginino)succinate + AMP + diphosphate + H(+). It functions in the pathway amino-acid biosynthesis; L-arginine biosynthesis; L-arginine from L-ornithine and carbamoyl phosphate: step 2/3. This is Argininosuccinate synthase from Laribacter hongkongensis (strain HLHK9).